The primary structure comprises 492 residues: ATP synthase subunit beta, chloroplastic (492 aa).

170–177 contacts ATP; that stretch reads GGAGVGKT.

The protein belongs to the ATPase alpha/beta chains family. F-type ATPases have 2 components, CF(1) - the catalytic core - and CF(0) - the membrane proton channel. CF(1) has five subunits: alpha(3), beta(3), gamma(1), delta(1), epsilon(1). CF(0) has four main subunits: a(1), b(1), b'(1) and c(9-12).

The protein resides in the plastid. Its subcellular location is the chloroplast thylakoid membrane. It catalyses the reaction ATP + H2O + 4 H(+)(in) = ADP + phosphate + 5 H(+)(out). Functionally, produces ATP from ADP in the presence of a proton gradient across the membrane. The catalytic sites are hosted primarily by the beta subunits. The polypeptide is ATP synthase subunit beta, chloroplastic (Psilotum nudum (Whisk fern)).